The sequence spans 78 residues: uncharacterized protein (78 aa).

Residues 21-43 form a helical membrane-spanning segment; the sequence is SPFLFGAPLVGGLLGGFLGSALF.

The protein resides in the membrane. This is an uncharacterized protein from Bacillus subtilis (strain 168).